The following is a 244-amino-acid chain: NAD(P)H-quinone oxidoreductase subunit K (244 aa).

[4Fe-4S] cluster contacts are provided by C60, C61, C125, and C156. Over residues 221–236 (SKKEKITELPENREQT) the composition is skewed to basic and acidic residues. Residues 221 to 244 (SKKEKITELPENREQTEIINSEEE) are disordered.

It belongs to the complex I 20 kDa subunit family. NDH-1 can be composed of about 15 different subunits; different subcomplexes with different compositions have been identified which probably have different functions. [4Fe-4S] cluster is required as a cofactor.

It is found in the cellular thylakoid membrane. It catalyses the reaction a plastoquinone + NADH + (n+1) H(+)(in) = a plastoquinol + NAD(+) + n H(+)(out). The enzyme catalyses a plastoquinone + NADPH + (n+1) H(+)(in) = a plastoquinol + NADP(+) + n H(+)(out). Its function is as follows. NDH-1 shuttles electrons from an unknown electron donor, via FMN and iron-sulfur (Fe-S) centers, to quinones in the respiratory and/or the photosynthetic chain. The immediate electron acceptor for the enzyme in this species is believed to be plastoquinone. Couples the redox reaction to proton translocation, and thus conserves the redox energy in a proton gradient. Cyanobacterial NDH-1 also plays a role in inorganic carbon-concentration. The polypeptide is NAD(P)H-quinone oxidoreductase subunit K (Prochlorococcus marinus (strain MIT 9312)).